The chain runs to 380 residues: Probable dual-specificity RNA methyltransferase RlmN (380 aa).

The active-site Proton acceptor is Glu123. The region spanning 129 to 362 (HEYGNSVCVT…VTIRREQGSD (234 aa)) is the Radical SAM core domain. Cysteines 136 and 367 form a disulfide. [4Fe-4S] cluster is bound by residues Cys143, Cys147, and Cys150. S-adenosyl-L-methionine is bound by residues 193–194 (GE), Ser225, 248–250 (SLH), and Asn324. Residue Cys367 is the S-methylcysteine intermediate of the active site.

It belongs to the radical SAM superfamily. RlmN family. Requires [4Fe-4S] cluster as cofactor.

Its subcellular location is the cytoplasm. It carries out the reaction adenosine(2503) in 23S rRNA + 2 reduced [2Fe-2S]-[ferredoxin] + 2 S-adenosyl-L-methionine = 2-methyladenosine(2503) in 23S rRNA + 5'-deoxyadenosine + L-methionine + 2 oxidized [2Fe-2S]-[ferredoxin] + S-adenosyl-L-homocysteine. It catalyses the reaction adenosine(37) in tRNA + 2 reduced [2Fe-2S]-[ferredoxin] + 2 S-adenosyl-L-methionine = 2-methyladenosine(37) in tRNA + 5'-deoxyadenosine + L-methionine + 2 oxidized [2Fe-2S]-[ferredoxin] + S-adenosyl-L-homocysteine. Specifically methylates position 2 of adenine 2503 in 23S rRNA and position 2 of adenine 37 in tRNAs. This Lysinibacillus sphaericus (strain C3-41) protein is Probable dual-specificity RNA methyltransferase RlmN.